A 243-amino-acid chain; its full sequence is Pyridoxine 5'-phosphate synthase (243 aa).

Asparagine 9 serves as a coordination point for 3-amino-2-oxopropyl phosphate. 11–12 contacts 1-deoxy-D-xylulose 5-phosphate; sequence DH. Arginine 20 contributes to the 3-amino-2-oxopropyl phosphate binding site. Histidine 45 serves as the catalytic Proton acceptor. The 1-deoxy-D-xylulose 5-phosphate site is built by arginine 47 and histidine 52. The active-site Proton acceptor is glutamate 72. Threonine 102 lines the 1-deoxy-D-xylulose 5-phosphate pocket. Histidine 193 (proton donor) is an active-site residue. 3-amino-2-oxopropyl phosphate contacts are provided by residues glycine 194 and 215 to 216; that span reads GH.

Belongs to the PNP synthase family. In terms of assembly, homooctamer; tetramer of dimers.

The protein localises to the cytoplasm. It carries out the reaction 3-amino-2-oxopropyl phosphate + 1-deoxy-D-xylulose 5-phosphate = pyridoxine 5'-phosphate + phosphate + 2 H2O + H(+). It participates in cofactor biosynthesis; pyridoxine 5'-phosphate biosynthesis; pyridoxine 5'-phosphate from D-erythrose 4-phosphate: step 5/5. Catalyzes the complicated ring closure reaction between the two acyclic compounds 1-deoxy-D-xylulose-5-phosphate (DXP) and 3-amino-2-oxopropyl phosphate (1-amino-acetone-3-phosphate or AAP) to form pyridoxine 5'-phosphate (PNP) and inorganic phosphate. This Yersinia pestis protein is Pyridoxine 5'-phosphate synthase.